We begin with the raw amino-acid sequence, 150 residues long: Helix-loop-helix protein hlh-12 (150 aa).

Positions 1–24 are disordered; it reads MAKKPRVTKLNTDRRSRANERERQ. Over residues 11–24 the composition is skewed to basic and acidic residues; it reads NTDRRSRANERERQ. Residues 13-26 are basic motif; sequence DRRSRANERERQRV. Residues 13–65 enclose the bHLH domain; it reads DRRSRANERERQRVSEMNGMFDVLLNLLPPSHFKTRLSRVQILREATSYIIRL. Residues 27–65 are helix-loop-helix motif; it reads SEMNGMFDVLLNLLPPSHFKTRLSRVQILREATSYIIRL.

Forms a heterodimer with helix-loop-helix protein hlh-2.

The protein localises to the nucleus. In terms of biological role, transcription factor which binds the E box motif 5'-GCAGGTG-3'. Involved in migration of the gonadal leader cells; distal tip cells (DTCs) in hermaphrodites, and linker cells in males. Positively regulates expression of alpha integrin ina-1 and ADAMTS protease gon-1. The sequence is that of Helix-loop-helix protein hlh-12 from Caenorhabditis elegans.